The chain runs to 473 residues: 3-isopropylmalate dehydratase large subunit (473 aa).

[4Fe-4S] cluster contacts are provided by cysteine 351, cysteine 414, and cysteine 417.

This sequence belongs to the aconitase/IPM isomerase family. LeuC type 1 subfamily. As to quaternary structure, heterodimer of LeuC and LeuD. It depends on [4Fe-4S] cluster as a cofactor.

It carries out the reaction (2R,3S)-3-isopropylmalate = (2S)-2-isopropylmalate. It participates in amino-acid biosynthesis; L-leucine biosynthesis; L-leucine from 3-methyl-2-oxobutanoate: step 2/4. Functionally, catalyzes the isomerization between 2-isopropylmalate and 3-isopropylmalate, via the formation of 2-isopropylmaleate. This is 3-isopropylmalate dehydratase large subunit from Acidovorax sp. (strain JS42).